Here is a 27-residue protein sequence, read N- to C-terminus: Caerulein precursor fragment R2 (27 aa).

As to expression, expressed by the skin glands.

The protein localises to the secreted. Functionally, antimicrobial peptide. The protein is Caerulein precursor fragment R2 of Xenopus ruwenzoriensis (Uganda clawed frog).